The primary structure comprises 469 residues: Glutamate--tRNA ligase (469 aa).

Positions 11–21 (PSPTGFIHLGN) match the 'HIGH' region motif. Residues 114-131 (QREAGEKPRYDGTWRPEP) are compositionally biased toward basic and acidic residues. A disordered region spans residues 114–139 (QREAGEKPRYDGTWRPEPGKVLPEPP). The 'KMSKS' region signature appears at 243–247 (KMSKR). Residue Lys246 coordinates ATP.

It belongs to the class-I aminoacyl-tRNA synthetase family. Glutamate--tRNA ligase type 1 subfamily. In terms of assembly, monomer.

The protein resides in the cytoplasm. The catalysed reaction is tRNA(Glu) + L-glutamate + ATP = L-glutamyl-tRNA(Glu) + AMP + diphosphate. In terms of biological role, catalyzes the attachment of glutamate to tRNA(Glu) in a two-step reaction: glutamate is first activated by ATP to form Glu-AMP and then transferred to the acceptor end of tRNA(Glu). This Paraburkholderia xenovorans (strain LB400) protein is Glutamate--tRNA ligase.